We begin with the raw amino-acid sequence, 369 residues long: MASSVFLSSFSSSSSLQLCSSFHGEYLAPSRCFLGAPVTSSSLSLSGKKNSYSPRQFHVSAKKVSGLEEAIRIRKMRELETKSKVRRNPPLRRGRVSPRLLVPDHIPRPPYVESGVLPDISSEFQIPGPEGIAKMRAACELAARVLNYAGTLVKPSVTTNEIDKAVHDMIIEAGAYPSPLGYGGFPKSVCTSVNECMCHGIPDSRQLQSGDIINIDVTVYLDGYHGDTSRTFFCGEVDEGFKRLVKVTEECLERGIAVCKDGASFKKIGKRISEHAEKFGYNVVERFVGHGVGPVFHSEPLIYHYRNDEPGLMVEGQTFTIEPILTIGTTECVTWPDNWTTLTADGGVAAQFEHTILITRTGSEILTKC.

Residues 1–61 (MASSVFLSSF…YSPRQFHVSA (61 aa)) constitute a chloroplast transit peptide. Residue His-199 coordinates substrate. Positions 216, 227, and 290 each coordinate a divalent metal cation. His-297 provides a ligand contact to substrate. A divalent metal cation contacts are provided by Glu-322 and Glu-353.

It belongs to the peptidase M24A family. Methionine aminopeptidase type 1 subfamily. Co(2+) serves as cofactor. Requires Zn(2+) as cofactor. Mn(2+) is required as a cofactor. It depends on Fe(2+) as a cofactor. In terms of tissue distribution, ubiquitous. Preferentially expressed in green tissues.

It is found in the plastid. The protein resides in the chloroplast. It carries out the reaction Release of N-terminal amino acids, preferentially methionine, from peptides and arylamides.. Its function is as follows. Removes the N-terminal methionine from nascent proteins. The N-terminal methionine is often cleaved when the second residue in the primary sequence is small and uncharged (Met-Ala-, Cys, Gly, Pro, Ser, Thr, or Val). The protein is Methionine aminopeptidase 1B, chloroplastic (MAP1B) of Arabidopsis thaliana (Mouse-ear cress).